A 129-amino-acid polypeptide reads, in one-letter code: S-adenosylmethionine decarboxylase proenzyme (129 aa).

S63 (schiff-base intermediate with substrate; via pyruvic acid) is an active-site residue. S63 is subject to Pyruvic acid (Ser); by autocatalysis. Residue H68 is the Proton acceptor; for processing activity of the active site. C83 serves as the catalytic Proton donor; for catalytic activity.

It belongs to the prokaryotic AdoMetDC family. Type 1 subfamily. Heterotetramer of two alpha and two beta chains arranged as a dimer of alpha/beta heterodimers. It depends on pyruvate as a cofactor. Post-translationally, is synthesized initially as an inactive proenzyme. Formation of the active enzyme involves a self-maturation process in which the active site pyruvoyl group is generated from an internal serine residue via an autocatalytic post-translational modification. Two non-identical subunits are generated from the proenzyme in this reaction, and the pyruvate is formed at the N-terminus of the alpha chain, which is derived from the carboxyl end of the proenzyme. The post-translation cleavage follows an unusual pathway, termed non-hydrolytic serinolysis, in which the side chain hydroxyl group of the serine supplies its oxygen atom to form the C-terminus of the beta chain, while the remainder of the serine residue undergoes an oxidative deamination to produce ammonia and the pyruvoyl group blocking the N-terminus of the alpha chain.

It catalyses the reaction S-adenosyl-L-methionine + H(+) = S-adenosyl 3-(methylsulfanyl)propylamine + CO2. It functions in the pathway amine and polyamine biosynthesis; S-adenosylmethioninamine biosynthesis; S-adenosylmethioninamine from S-adenosyl-L-methionine: step 1/1. Its function is as follows. Catalyzes the decarboxylation of S-adenosylmethionine to S-adenosylmethioninamine (dcAdoMet), the propylamine donor required for the synthesis of the polyamines spermine and spermidine from the diamine putrescine. The polypeptide is S-adenosylmethionine decarboxylase proenzyme (Shouchella clausii (strain KSM-K16) (Alkalihalobacillus clausii)).